Reading from the N-terminus, the 215-residue chain is Cytochrome b6 (215 aa).

Residues 32-52 (IFYCLGGITLTCFLVQVATGF) form a helical membrane-spanning segment. Cysteine 35 contacts heme c. 2 residues coordinate heme b: histidine 86 and histidine 100. 3 consecutive transmembrane segments (helical) span residues 90-110 (ASMMVLMMILHVFRVYLTGGF), 116-136 (LTWVTGVVLAVLTASFGVTGY), and 186-206 (LHTFVLPLLTAVFMLMHFLMI). Heme b contacts are provided by histidine 187 and histidine 202.

Belongs to the cytochrome b family. PetB subfamily. In terms of assembly, the 4 large subunits of the cytochrome b6-f complex are cytochrome b6, subunit IV (17 kDa polypeptide, PetD), cytochrome f and the Rieske protein, while the 4 small subunits are PetG, PetL, PetM and PetN. The complex functions as a dimer. Heme b is required as a cofactor. The cofactor is heme c.

The protein resides in the plastid. Its subcellular location is the chloroplast thylakoid membrane. In terms of biological role, component of the cytochrome b6-f complex, which mediates electron transfer between photosystem II (PSII) and photosystem I (PSI), cyclic electron flow around PSI, and state transitions. This Morus indica (Mulberry) protein is Cytochrome b6.